Reading from the N-terminus, the 375-residue chain is Chaperone protein DnaJ (375 aa).

Residues 4–68 form the J domain; sequence DYYEILGVSR…ETRARYDRFG (65 aa). The segment at 134–216 adopts a CR-type zinc-finger fold; the sequence is GGEKEIRIRH…CGGSGRKQET (83 aa). Residues cysteine 147, cysteine 150, cysteine 164, cysteine 167, cysteine 190, cysteine 193, cysteine 204, and cysteine 207 each coordinate Zn(2+). 4 CXXCXGXG motif repeats span residues 147-154, 164-171, 190-197, and 204-211; these read CQVCEGSG, CSTCSGSG, CPTCNGSG, and CEACGGSG.

The protein belongs to the DnaJ family. As to quaternary structure, homodimer. Zn(2+) is required as a cofactor.

It is found in the cytoplasm. Its function is as follows. Participates actively in the response to hyperosmotic and heat shock by preventing the aggregation of stress-denatured proteins and by disaggregating proteins, also in an autonomous, DnaK-independent fashion. Unfolded proteins bind initially to DnaJ; upon interaction with the DnaJ-bound protein, DnaK hydrolyzes its bound ATP, resulting in the formation of a stable complex. GrpE releases ADP from DnaK; ATP binding to DnaK triggers the release of the substrate protein, thus completing the reaction cycle. Several rounds of ATP-dependent interactions between DnaJ, DnaK and GrpE are required for fully efficient folding. Also involved, together with DnaK and GrpE, in the DNA replication of plasmids through activation of initiation proteins. The protein is Chaperone protein DnaJ of Gloeothece citriformis (strain PCC 7424) (Cyanothece sp. (strain PCC 7424)).